Consider the following 396-residue polypeptide: MHSLISSDDVWVLWGFIAVWAAVSIGLEQRFKWASAVSGAIIALAGAMVFTNVGVLPVESPVYDTVWSYVVPLAIPLLLFQINVRQIFKESRRLLFIFLISSVGTVLGSILAFFLLKQHIPYLDKIGGMISASYIGGGVNFAAMAAKFETPGEYVSATVVADNFMMALLFFILISIPALKWFQRHYAMPFEEKVKADGNSGNSAESYWKRKDISLKDIAFNAGAAFALVAVSMKVSGYFKSIFSHPLLTGTLGDQYLVLTSLTVLIIFLFPRFFERLNGSQELGTFLIYLFFVVIGIPADLRLIVTNAPLILLFVFIIAISNLAVSLAAGKLFRVRLEEILLAVNATVGGPTTAAAMAIAKGWRELVAPIMLVGTLGYLIGNYVGTFMGNWFSSFL.

The next 11 helical transmembrane spans lie at 7–27 (SDDV…SIGL), 36–56 (AVSG…VGVL), 62–82 (VYDT…LFQI), 94–114 (LLFI…LAFF), 159–179 (VVAD…IPAL), 218–238 (IAFN…VSGY), 250–270 (GTLG…IFLF), 285–305 (TFLI…RLIV), 310–330 (LILL…LAAG), 340–360 (ILLA…MAIA), and 367–387 (VAPI…VGTF).

It is found in the cell membrane. This is an uncharacterized protein from Bacillus subtilis (strain 168).